The sequence spans 1807 residues: Integrin beta-4 (1807 aa).

A signal peptide spans 1-27 (MAGLCSSPWVKLLLAVVLSAGLPGNMA). Residues 28-713 (NRCKKAQVKS…KKKDCLPAPS (686 aa)) lie on the Extracellular side of the membrane. Positions 29–73 (RCKKAQVKSCTECIRVDKSCAYCTDELFKERRCNTQADVLAAGCR) constitute a PSI domain. Disulfide bonds link C30/C48, C38/C456, C41/C61, C51/C72, C245/C288, C458/C477, C469/C480, and C482/C491. Positions 131-340 (DLYILMDFSN…SYYEKLHKYF (210 aa)) constitute a VWFA domain. 2 residues coordinate Mg(2+): S139 and S141. Residues S141, D144, D145, and D176 each coordinate Ca(2+). The tract at residues 194–199 (WPNSDP) is involved in NRG1- and IGF1-binding. Positions 228, 230, 232, and 233 each coordinate Ca(2+). E233 is a Mg(2+) binding site. An N-linked (GlcNAc...) asparagine glycan is attached at N327. Ca(2+) is bound at residue E350. I-EGF domains follow at residues 458–492 (CELQ…KTCN), 493–538 (CSTG…HFCE), 539–575 (YDNF…RSCD), and 576–617 (CPLS…TTCE). An N-linked (GlcNAc...) asparagine glycan is attached at N492. 11 cysteine pairs are disulfide-bonded: C493/C521, C504/C519, C513/C524, C526/C537, C544/C558, C552/C563, C565/C574, C576/C599, C583/C597, C591/C602, and C604/C616. N580 is a glycosylation site (N-linked (GlcNAc...) asparagine). N619 is a glycosylation site (N-linked (GlcNAc...) asparagine). 4 disulfide bridges follow: C628–C673, C634–C653, C637–C650, and C682–C708. The N-linked (GlcNAc...) asparagine glycan is linked to N697. The helical transmembrane segment at 714–734 (WWLIPLLIFLLLLLVLLLLLC) threads the bilayer. Residues 734-751 (CWKYCACCKACLGLLPCC) form a palmitoylated on several cysteines region. Topologically, residues 735-1807 (WKYCACCKAC…THMDQQFFQT (1073 aa)) are cytoplasmic. Residues S773, S1071, and S1121 each carry the phosphoserine modification. The Calx-beta domain occupies 981-1086 (VNITIIKEQA…QVRRFQVQLS (106 aa)). The interval 1119 to 1141 (SASPPLPRGDLGAPQNPNAKAAG) is disordered. 2 consecutive Fibronectin type-III domains span residues 1131–1220 (APQN…THQE) and 1224–1323 (EPGR…TQPK). A phosphoserine mark is found at S1386, S1389, and S1405. A Phosphothreonine modification is found at T1418. S1425 bears the Phosphoserine mark. Phosphothreonine is present on T1514. 2 consecutive Fibronectin type-III domains span residues 1514–1609 (TPTR…VHPQ) and 1627–1723 (APGP…SQDG). S1776 is subject to Phosphoserine.

Belongs to the integrin beta chain family. Heterodimer of an alpha and a beta subunit. Beta-4 associates with alpha-6. Interacts (via cytoplasmic region) with COL17A1 (via cytoplasmic region). Interacts (via cytoplasmic region) with DST isoform 3 (via N-terminus). Interacts (via cytoplasmic domain) with DST (via N-terminus). Interacts with RAC1. ITGA6:ITGB4 is found in a ternary complex with NRG1 and ERBB3. ITGA6:ITGB4 is found in a ternary complex with IGF1 and IGF1R. ITGA6:ITGB4 interacts with IGF2. Interacts with TMEM268; this interaction prevents ITGB4 degradation. Post-translationally, palmitoylated by DHHC3 at several cysteines of the membrane-proximal region, enhancing stability and cell surface expression. Palmitoylation also promotes secondary association with tertaspanins.

Its subcellular location is the cell membrane. The protein localises to the cell junction. It is found in the hemidesmosome. Functionally, integrin alpha-6/beta-4 is a receptor for laminin. It plays a critical structural role in the hemidesmosome of epithelial cells. Is required for the regulation of keratinocyte polarity and motility. ITGA6:ITGB4 binds to NRG1 (via EGF domain) and this binding is essential for NRG1-ERBB signaling. ITGA6:ITGB4 binds to IGF1 and this binding is essential for IGF1 signaling. ITGA6:ITGB4 binds to IGF2 and this binding is essential for IGF2 signaling. This chain is Integrin beta-4 (Itgb4), found in Rattus norvegicus (Rat).